Here is an 864-residue protein sequence, read N- to C-terminus: DNA mismatch repair protein MutS (864 aa).

ATP is bound at residue 613–620; the sequence is GPNMGGKS.

Belongs to the DNA mismatch repair MutS family.

This protein is involved in the repair of mismatches in DNA. It is possible that it carries out the mismatch recognition step. This protein has a weak ATPase activity. This chain is DNA mismatch repair protein MutS, found in Actinobacillus pleuropneumoniae serotype 3 (strain JL03).